A 327-amino-acid polypeptide reads, in one-letter code: NADPH-dependent aldose reductase GRE3 (327 aa).

Tyr49 serves as the catalytic Proton donor. His111 lines the substrate pocket. 219–286 (SSFGPQSFIE…SSKKERLLGN (68 aa)) serves as a coordination point for NADP(+).

This sequence belongs to the aldo/keto reductase family. In terms of assembly, monomer.

It localises to the cytoplasm. It is found in the nucleus. It catalyses the reaction an alditol + NAD(+) = an aldose + NADH + H(+). It carries out the reaction an alditol + NADP(+) = an aldose + NADPH + H(+). Aldose reductase with a broad substrate specificity. Reduces the cytotoxic compound methylglyoxal (MG) to acetol and (R)-lactaldehyde under stress conditions. MG is synthesized via a bypath of glycolysis from dihydroxyacetone phosphate and is believed to play a role in cell cycle regulation and stress adaptation. In pentose-fermenting yeasts, aldose reductase catalyzes the reduction of xylose into xylitol. The purified enzyme catalyzes this reaction, but the inability of S.cerevisiae to grow on xylose as sole carbon source indicates that the physiological function is more likely methylglyoxal reduction. The chain is NADPH-dependent aldose reductase GRE3 from Saccharomyces cerevisiae (strain ATCC 204508 / S288c) (Baker's yeast).